The primary structure comprises 166 residues: Nucleotide-binding protein Dred_1927 (166 aa).

Belongs to the YajQ family.

In terms of biological role, nucleotide-binding protein. This Desulforamulus reducens (strain ATCC BAA-1160 / DSM 100696 / MI-1) (Desulfotomaculum reducens) protein is Nucleotide-binding protein Dred_1927.